The chain runs to 632 residues: Chaperone protein HtpG (632 aa).

The tract at residues 1 to 339 (MAHETMSFQA…SADLPLNVSR (339 aa)) is a; substrate-binding. Residues 340-559 (EILQESRDVK…DNDMSGYLQR (220 aa)) form a b region. Residues 560–632 (MLKAAGQNAP…TNALLLSRAA (73 aa)) form a c region.

It belongs to the heat shock protein 90 family. Homodimer.

It localises to the cytoplasm. Functionally, molecular chaperone. Has ATPase activity. The sequence is that of Chaperone protein HtpG from Burkholderia cenocepacia (strain HI2424).